A 148-amino-acid chain; its full sequence is UPF0756 membrane protein YeaL (148 aa).

The next 4 membrane-spanning stretches (helical) occupy residues 14 to 34 (ALGFISHNTTVAVSILVLIIV), 51 to 71 (LSIGIIILTIGIMAPIASGTL), 86 to 106 (LVAIAVGVIVSWLGGRGVTLM), and 121 to 141 (VLGVALFRGVPVGPLIAAGLV).

Belongs to the UPF0756 family.

The protein resides in the cell membrane. The polypeptide is UPF0756 membrane protein YeaL (Escherichia coli O127:H6 (strain E2348/69 / EPEC)).